Here is a 97-residue protein sequence, read N- to C-terminus: Alpha-latrotoxin associated low molecular weight protein 2 (97 aa).

The first 19 residues, Met1–Ala19, serve as a signal peptide directing secretion. 3 disulfides stabilise this stretch: Cys36–Cys72, Cys52–Cys68, and Cys55–Cys81.

This sequence belongs to the arthropod CHH/MIH/GIH/VIH hormone family. In terms of tissue distribution, expressed by the venom gland.

Its subcellular location is the secreted. Functionally, may increase the toxicity of alpha-latrotoxin and/or other venom components. Is non-toxic to mice and to the cockroach Periplaneta americana. The chain is Alpha-latrotoxin associated low molecular weight protein 2 from Steatoda grossa (False black widow).